The sequence spans 216 residues: Thymidine kinase (216 aa).

ATP is bound by residues 9–16 (GPMDSGKS) and 86–89 (DEAQ). E87 functions as the Proton acceptor in the catalytic mechanism.

Belongs to the thymidine kinase family. As to quaternary structure, homotetramer.

The protein localises to the cytoplasm. The catalysed reaction is thymidine + ATP = dTMP + ADP + H(+). This Cutibacterium acnes (strain DSM 16379 / KPA171202) (Propionibacterium acnes) protein is Thymidine kinase.